A 1001-amino-acid polypeptide reads, in one-letter code: ATP-dependent DNA/RNA helicase DHX36 (1001 aa).

Positions 1-44 (MSYDYHQSWSRDGGPRGSGQGSSGGGGGGSRGSGGGGGGRGGRG) are required for recruitment to cytoplasmic stress granules. The interval 1 to 54 (MSYDYHQSWSRDGGPRGSGQGSSGGGGGGSRGSGGGGGGRGGRGRHPAHLKGRE) is disordered. The tract at residues 1–97 (MSYDYHQSWS…IVQLLNSVQA (97 aa)) is required for the pre-miR-134 transport. The segment at 1-193 (MSYDYHQSWS…KKTDPRYIEM (193 aa)) is necessary for nuclear and nucleolar caps localizations. Over residues 15-41 (PRGSGQGSSGGGGGGSRGSGGGGGGRG) the composition is skewed to gly residues. Residues 46–68 (HPAHLKGREIGLWYAKKQTQKNK) are DSM (DHX36-specific motif). The segment at 46–98 (HPAHLKGREIGLWYAKKQTQKNKEAERQERAVVHMDERREEQIVQLLNSVQAK) is required for G4-DNA- and G4-RNA-binding. 2 recA-like domain regions span residues 99-379 (TDKD…MIHI) and 380-621 (PGFT…DYQL). Residues 120–147 (EVSSEKKINSEKKLDNQEKKLLNQEKKT) are a coiled coil. Residue Ser154 is modified to Phosphoserine. Positions 210–380 (VNLINNHQVT…FGNCPMIHIP (171 aa)) constitute a Helicase ATP-binding domain. 226–231 (GCGKTT) provides a ligand contact to ATP. A necessary for interaction with single-stranded DNA at the 3'-end of the G4-DNA structure region spans residues 258–310 (RRISAISVAERVATERAESCGNGNSTGYQIRLQSRLPRKQGSILYCTTGIILQ). The short motif at 327–330 (DEIH) is the DEAH box element. Mg(2+) is bound by residues Glu328 and His330. The region spanning 470-640 (ALIRYIVLEE…ELCLQIKILR (171 aa)) is the Helicase C-terminal domain. Residues 491–550 (WDNISTLHDLLMSQVMFKSDKFLIIPLHSLMPTVNQTQVFKKTPPGVRKIVIATNIAETS) are necessary for interaction with single-stranded DNA at the 3'-end of the G4-DNA structure. The Nuclear localization signal signature appears at 510–521 (DKFLIIPLHSLM). Residues Ser550 and 595–598 (RAGR) contribute to the ATP site. The segment at 622–691 (PEILRTPLEE…LGVHLARLPV (70 aa)) is WH domain. Necessary for interaction with single-stranded DNA at the 3'-end of the G4-DNA structure regions lie at residues 631–690 (ELCL…ARLP), 842–853 (NLGKKRKMVKVH), and 863–893 (HPKS…IYLY). Positions 834–898 (PKVAKIRLNL…SIYLYDCTEV (65 aa)) are OB-fold-like subdomains. Lys940 carries the N6-acetyllysine modification. Ser956 carries the post-translational modification Phosphoserine.

This sequence belongs to the DEAD box helicase family. DEAH subfamily. In terms of assembly, found in a multi-helicase-TICAM1 complex at least composed of DHX36, DDX1, DDX21 and TICAM1; this complex exists in resting cells with or without dsRNA poly(I:C) ligand stimulation. Interacts (via C-terminus) with TICAM1 (via TIR domain). Interacts (via C-terminus) with DDX21; this interaction serves as bridges to TICAM1. Interacts with TERT; this interaction is dependent on the ability of DHX36 to bind to the G-quadruplex RNA (G4-RNA) structure present in the telomerase RNA template component (TERC). Interacts with DKC1; this interaction is dependent on the ability of DHX36 to bind to the G4-RNA structure present in TERC. Interacts with PARN; this interaction stimulates PARN to enhance uPA mRNA decay. Interacts with EXOSC3; this interaction occurs in a RNase-insensitive manner. Interacts with EXOSC10; this interaction occurs in a RNase-insensitive manner. Interacts with ILF3; this interaction occurs in a RNA-dependent manner. Interacts with ELAVL1; this interaction occurs in an RNA-dependent manner. Interacts with DDX5; this interaction occurs in a RNA-dependent manner. Interacts with DDX17; this interaction occurs in a RNA-dependent manner. Interacts with HDAC1; this interaction occurs in a RNA-dependent manner. Interacts with HDAC3; this interaction occurs in a RNA-dependent manner. Interacts with HDAC4. Interacts with AGO1. Interacts with AGO2. Interacts with ERCC6. Requires Mg(2+) as cofactor. As to expression, expressed in spermatogonia stem cells and primary spermatocytes (at protein level). Expressed strongly in testis. Weakly expressed in heart, lung, liver, kidney, small intestine, spleen, lymphe node and thymus.

Its subcellular location is the nucleus. The protein resides in the cytoplasm. It is found in the cytosol. It localises to the stress granule. The protein localises to the nucleus speckle. Its subcellular location is the chromosome. The protein resides in the telomere. It is found in the mitochondrion. It localises to the perikaryon. The protein localises to the cell projection. Its subcellular location is the dendrite. The protein resides in the axon. It carries out the reaction ATP + H2O = ADP + phosphate + H(+). With respect to regulation, ATPase activity is enhanced in the presence of homomeric poly(U) RNAs, but not by double-stranded DNA (dsDNA), double-stranded RNA (dsRNA) and tRNA. Functionally, multifunctional ATP-dependent helicase that unwinds G-quadruplex (G4) structures. Plays a role in many biological processes such as genomic integrity, gene expression regulations and as a sensor to initiate antiviral responses. G4 structures correspond to helical structures containing guanine tetrads. Binds with high affinity to and unwinds G4 structures that are formed in nucleic acids (G4-DNA and G4-RNA). Plays a role in genomic integrity. Converts the G4-RNA structure present in telomerase RNA template component (TREC) into a double-stranded RNA to promote P1 helix formation that acts as a template boundary ensuring accurate reverse transcription. Plays a role in transcriptional regulation. Resolves G4-DNA structures in promoters of genes, such as YY1, KIT/c-kit and ALPL and positively regulates their expression. Plays a role in post-transcriptional regulation. Unwinds a G4-RNA structure located in the 3'-UTR polyadenylation site of the pre-mRNA TP53 and stimulates TP53 pre-mRNA 3'-end processing in response to ultraviolet (UV)-induced DNA damage. Binds to the precursor-microRNA-134 (pre-miR-134) terminal loop and regulates its transport into the synapto-dendritic compartment. Involved in the pre-miR-134-dependent inhibition of target gene expression and the control of dendritic spine size. Plays a role in the regulation of cytoplasmic mRNA translation and mRNA stability. Binds to both G4-RNA structures and alternative non-quadruplex-forming sequence within the 3'-UTR of the PITX1 mRNA regulating negatively PITX1 protein expression. Binds to both G4-RNA structure in the 5'-UTR and AU-rich elements (AREs) localized in the 3'-UTR of NKX2-5 mRNA to either stimulate protein translation or induce mRNA decay in an ELAVL1-dependent manner, respectively. Also binds to ARE sequences present in several mRNAs mediating exosome-mediated 3'-5' mRNA degradation. Involved in cytoplasmic urokinase-type plasminogen activator (uPA) mRNA decay. Component of a multi-helicase-TICAM1 complex that acts as a cytoplasmic sensor of viral double-stranded RNA (dsRNA) and plays a role in the activation of a cascade of antiviral responses including the induction of pro-inflammatory cytokines via the adapter molecule TICAM1. Required for the early embryonic development and hematopoiesis. Involved in the regulation of cardioblast differentiation and proliferation during heart development. Involved in spermatogonia differentiation. May play a role in ossification. The polypeptide is ATP-dependent DNA/RNA helicase DHX36 (Mus musculus (Mouse)).